A 157-amino-acid chain; its full sequence is Transcription elongation factor GreA (157 aa).

The protein belongs to the GreA/GreB family.

Its function is as follows. Necessary for efficient RNA polymerase transcription elongation past template-encoded arresting sites. The arresting sites in DNA have the property of trapping a certain fraction of elongating RNA polymerases that pass through, resulting in locked ternary complexes. Cleavage of the nascent transcript by cleavage factors such as GreA or GreB allows the resumption of elongation from the new 3'terminus. GreA releases sequences of 2 to 3 nucleotides. The protein is Transcription elongation factor GreA of Mesorhizobium japonicum (strain LMG 29417 / CECT 9101 / MAFF 303099) (Mesorhizobium loti (strain MAFF 303099)).